A 571-amino-acid polypeptide reads, in one-letter code: Proline--tRNA ligase (571 aa).

Belongs to the class-II aminoacyl-tRNA synthetase family. ProS type 1 subfamily. As to quaternary structure, homodimer.

Its subcellular location is the cytoplasm. It catalyses the reaction tRNA(Pro) + L-proline + ATP = L-prolyl-tRNA(Pro) + AMP + diphosphate. Its function is as follows. Catalyzes the attachment of proline to tRNA(Pro) in a two-step reaction: proline is first activated by ATP to form Pro-AMP and then transferred to the acceptor end of tRNA(Pro). As ProRS can inadvertently accommodate and process non-cognate amino acids such as alanine and cysteine, to avoid such errors it has two additional distinct editing activities against alanine. One activity is designated as 'pretransfer' editing and involves the tRNA(Pro)-independent hydrolysis of activated Ala-AMP. The other activity is designated 'posttransfer' editing and involves deacylation of mischarged Ala-tRNA(Pro). The misacylated Cys-tRNA(Pro) is not edited by ProRS. In Pseudomonas fluorescens (strain Pf0-1), this protein is Proline--tRNA ligase.